Consider the following 315-residue polypeptide: NAD-dependent protein deacylase sirtuin-5, mitochondrial (315 aa).

The transit peptide at 1–39 (MSLLHFATRRLILQVLRELGLKAPPVHKTLKICIAMSRP) directs the protein to the mitochondrion. The region spanning 40–312 (SSNMADFRRF…PEALSPHESE (273 aa)) is the Deacetylase sirtuin-type domain. NAD(+) is bound at residue 61–80 (GAGVSAESGVPTFRGPGGFW). Substrate contacts are provided by Y105 and R108. 143–146 (QNID) provides a ligand contact to NAD(+). The active-site Proton acceptor is the H161. Residues 254 to 256 (GTS), 280 to 282 (NTV), and C298 contribute to the NAD(+) site.

It belongs to the sirtuin family. Class III subfamily. Monomer. Homodimer. Interacts with CPS1.

The protein resides in the mitochondrion. It is found in the cytoplasm. Its subcellular location is the cytosol. It localises to the nucleus. It carries out the reaction N(6)-malonyl-L-lysyl-[protein] + NAD(+) + H2O = 2''-O-malonyl-ADP-D-ribose + nicotinamide + L-lysyl-[protein]. The enzyme catalyses N(6)-succinyl-L-lysyl-[protein] + NAD(+) + H2O = 2''-O-succinyl-ADP-D-ribose + nicotinamide + L-lysyl-[protein]. It catalyses the reaction N(6)-glutaryl-L-lysyl-[protein] + NAD(+) + H2O = 2''-O-glutaryl-ADP-D-ribose + nicotinamide + L-lysyl-[protein]. In terms of biological role, NAD-dependent lysine demalonylase, desuccinylase and deglutarylase that specifically removes malonyl, succinyl and glutaryl groups on target proteins. Activates CPS1 and contributes to the regulation of blood ammonia levels during prolonged fasting: acts by mediating desuccinylation and deglutarylation of CPS1, thereby increasing CPS1 activity in response to elevated NAD levels during fasting. Activates SOD1 by mediating its desuccinylation, leading to reduced reactive oxygen species. Activates SHMT2 by mediating its desuccinylation. Modulates ketogenesis through the desuccinylation and activation of HMGCS2. Has weak NAD-dependent protein deacetylase activity; however this activity may not be physiologically relevant in vivo. Can deacetylate cytochrome c (CYCS) and a number of other proteins in vitro such as UOX. The protein is NAD-dependent protein deacylase sirtuin-5, mitochondrial of Monodelphis domestica (Gray short-tailed opossum).